Reading from the N-terminus, the 443-residue chain is Methyl-coenzyme M reductase I subunit beta (443 aa).

Residue Tyr367 participates in coenzyme M binding. Coenzyme B is bound at residue Gly369.

It belongs to the methyl-coenzyme M reductase beta subunit family. MCR is a hexamer of two alpha, two beta, and two gamma chains, forming a dimer of heterotrimers. Coenzyme F430 serves as cofactor.

It localises to the cytoplasm. It carries out the reaction coenzyme B + methyl-coenzyme M = methane + coenzyme M-coenzyme B heterodisulfide. It functions in the pathway one-carbon metabolism; methyl-coenzyme M reduction; methane from methyl-coenzyme M: step 1/1. Functionally, component of the methyl-coenzyme M reductase (MCR) I that catalyzes the reductive cleavage of methyl-coenzyme M (CoM-S-CH3 or 2-(methylthio)ethanesulfonate) using coenzyme B (CoB or 7-mercaptoheptanoylthreonine phosphate) as reductant which results in the production of methane and the mixed heterodisulfide of CoB and CoM (CoM-S-S-CoB). This is the final step in methanogenesis. This chain is Methyl-coenzyme M reductase I subunit beta (mcrB), found in Methanothermobacter thermautotrophicus (strain ATCC 29096 / DSM 1053 / JCM 10044 / NBRC 100330 / Delta H) (Methanobacterium thermoautotrophicum).